A 719-amino-acid chain; its full sequence is Histone-lysine N-methyltransferase SETDB2 (719 aa).

The segment covering Ser72 to Asp82 has biased composition (polar residues). The disordered stretch occupies residues Ser72–Ser102. An MBD domain is found at Leu157 to Gln229. The Pre-SET domain occupies Asp291 to Gly364. Residues Cys293, Cys295, Cys299, Cys305, Cys307, Cys345, Cys349, Cys351, and Cys356 each contribute to the Zn(2+) site. In terms of domain architecture, SET spans Val367–Gly694. Residues Lys377–Trp379 and Asp418 contribute to the S-adenosyl-L-methionine site. The segment at Phe508–Glu547 is disordered. Positions Asp520–Asn530 are enriched in basic and acidic residues. Residues Lys532–Asn543 show a composition bias toward polar residues. S-adenosyl-L-methionine contacts are provided by residues Arg648 and Asn651–His652. Zn(2+)-binding residues include Cys654, Cys707, Cys709, and Cys714.

Belongs to the class V-like SAM-binding methyltransferase superfamily. In terms of tissue distribution, ubiquitous. Highest expression in heart, testis and ovary.

Its subcellular location is the nucleus. It localises to the chromosome. It carries out the reaction N(6),N(6)-dimethyl-L-lysyl(9)-[histone H3] + S-adenosyl-L-methionine = N(6),N(6),N(6)-trimethyl-L-lysyl(9)-[histone H3] + S-adenosyl-L-homocysteine + H(+). Histone methyltransferase involved in left-right axis specification in early development and mitosis. Specifically trimethylates 'Lys-9' of histone H3 (H3K9me3). H3K9me3 is a specific tag for epigenetic transcriptional repression that recruits HP1 (CBX1, CBX3 and/or CBX5) proteins to methylated histones. Contributes to H3K9me3 in both the interspersed repetitive elements and centromere-associated repeats. Plays a role in chromosome condensation and segregation during mitosis. The sequence is that of Histone-lysine N-methyltransferase SETDB2 (SETDB2) from Homo sapiens (Human).